The primary structure comprises 253 residues: Tryptophan synthase alpha chain (253 aa).

Active-site proton acceptor residues include glutamate 44 and aspartate 55.

Belongs to the TrpA family. In terms of assembly, tetramer of two alpha and two beta chains.

It carries out the reaction (1S,2R)-1-C-(indol-3-yl)glycerol 3-phosphate + L-serine = D-glyceraldehyde 3-phosphate + L-tryptophan + H2O. It functions in the pathway amino-acid biosynthesis; L-tryptophan biosynthesis; L-tryptophan from chorismate: step 5/5. The alpha subunit is responsible for the aldol cleavage of indoleglycerol phosphate to indole and glyceraldehyde 3-phosphate. The protein is Tryptophan synthase alpha chain (trpA) of Chlamydia trachomatis serovar D (strain ATCC VR-885 / DSM 19411 / UW-3/Cx).